The sequence spans 299 residues: Probable alpha-L-glutamate ligase 2 (299 aa).

The ATP-grasp domain maps to 104–287 (MQLMSRRGIG…VAGAIIEFVE (184 aa)). ATP-binding positions include lysine 141, 178–179 (EY), aspartate 187, and 211–213 (RSN). Residues aspartate 248, glutamate 260, and asparagine 262 each coordinate Mg(2+). The Mn(2+) site is built by aspartate 248, glutamate 260, and asparagine 262.

It belongs to the RimK family. The cofactor is Mg(2+). Mn(2+) serves as cofactor.

This chain is Probable alpha-L-glutamate ligase 2, found in Shewanella sp. (strain MR-4).